Here is a 209-residue protein sequence, read N- to C-terminus: Small ribosomal subunit protein uS3 (209 aa).

A KH type-2 domain is found at 38–107; that stretch reads IRKVVKNAYS…RVIVNVEEIK (70 aa).

The protein belongs to the universal ribosomal protein uS3 family. Part of the 30S ribosomal subunit. Forms a tight complex with proteins S10 and S14.

Its function is as follows. Binds the lower part of the 30S subunit head. Binds mRNA in the 70S ribosome, positioning it for translation. The chain is Small ribosomal subunit protein uS3 from Pseudothermotoga lettingae (strain ATCC BAA-301 / DSM 14385 / NBRC 107922 / TMO) (Thermotoga lettingae).